Here is a 116-residue protein sequence, read N- to C-terminus: G antigen 2B/2C (116 aa).

The segment at 1–116 is disordered; the sequence is MSWRGRSTYR…PEEGEKQSQC (116 aa). 2 stretches are compositionally biased toward acidic residues: residues 31–44 and 86–95; these read FSDE…EEGE and ECEDGPDGQE. The span at 102 to 116 shows a compositional bias: basic and acidic residues; it reads EEVKTPEEGEKQSQC.

The protein belongs to the GAGE family. As to expression, expressed in a variety of tumor tissues but not in normal tissues, except testis.

In terms of biological role, antigen, recognized on melanoma by autologous cytolytic T-lymphocytes. The protein is G antigen 2B/2C (GAGE2B) of Homo sapiens (Human).